The primary structure comprises 225 residues: MKLSAEMKAFEARLGYSFERPELLVRALTHGSISSSTRQDNQRLEFLGDRVLGLVMATALLEADKDATEGQLAPRFNALVRKETCAEVAREADLGAVLKLGRSEMMSGGRRKLALLGDAMEAVIAAVYRDGGFAAAEAVILRLWGARVHQVEADARDAKTALQEWAQARGQTPPRYELVKRSGPDHAPVFTILAELADGRRAEATAGAKRQAEQAAARKLLDSLD.

Residues 7–132 form the RNase III domain; it reads MKAFEARLGY…VIAAVYRDGG (126 aa). E45 serves as a coordination point for Mg(2+). D49 is a catalytic residue. Residues D118 and E121 each coordinate Mg(2+). E121 is an active-site residue. The DRBM domain occupies 157–225; it reads DAKTALQEWA…AARKLLDSLD (69 aa).

This sequence belongs to the ribonuclease III family. Homodimer. Requires Mg(2+) as cofactor.

The protein resides in the cytoplasm. The catalysed reaction is Endonucleolytic cleavage to 5'-phosphomonoester.. In terms of biological role, digests double-stranded RNA. Involved in the processing of primary rRNA transcript to yield the immediate precursors to the large and small rRNAs (23S and 16S). Processes some mRNAs, and tRNAs when they are encoded in the rRNA operon. Processes pre-crRNA and tracrRNA of type II CRISPR loci if present in the organism. The protein is Ribonuclease 3 of Ruegeria pomeroyi (strain ATCC 700808 / DSM 15171 / DSS-3) (Silicibacter pomeroyi).